The sequence spans 182 residues: CDP-diacylglycerol--glycerol-3-phosphate 3-phosphatidyltransferase (182 aa).

At 1-12 (MQLNIPTWLTLF) the chain is on the cytoplasmic side. A helical transmembrane segment spans residues 13 to 37 (RVVLIPFFVLAFYLPFVWAPMVCAI). Residues 38–60 (IFVFAAATDWFDGFLARRWKQTT) lie on the Periplasmic side of the membrane. Residues 61–81 (RFGAFLDPVADKVMVAIALVL) form a helical membrane-spanning segment. Residues 82–86 (VAEHY) are Cytoplasmic-facing. The chain crosses the membrane as a helical span at residues 87–107 (HVWWITLPAATMIAREIIISS). Topologically, residues 108–145 (LREWMAEIGKRSSVAVSWIGKVKTTAQMGSLVGLLWRP) are periplasmic. The chain crosses the membrane as a helical span at residues 146-168 (DHNIELASFVLLYIAAVLTFWSM). The Cytoplasmic portion of the chain corresponds to 169-181 (FQYLNAAWKDLLE).

Belongs to the CDP-alcohol phosphatidyltransferase class-I family.

The protein localises to the cell inner membrane. It carries out the reaction a CDP-1,2-diacyl-sn-glycerol + sn-glycerol 3-phosphate = a 1,2-diacyl-sn-glycero-3-phospho-(1'-sn-glycero-3'-phosphate) + CMP + H(+). The protein operates within phospholipid metabolism; phosphatidylglycerol biosynthesis; phosphatidylglycerol from CDP-diacylglycerol: step 1/2. Catalyzes the conversion of cytidine diphosphate diacylglycerol (CDP-DG) and glycerol 3-phosphate into phosphatidylglycerol. Essential for the synthesis of anionic phospholipids, thereby playing a role in balancing the ratio of zwitterionic and anionic phospholipids, which is thought to be important for normal membrane function. This chain is CDP-diacylglycerol--glycerol-3-phosphate 3-phosphatidyltransferase, found in Yersinia enterocolitica serotype O:8 / biotype 1B (strain NCTC 13174 / 8081).